We begin with the raw amino-acid sequence, 424 residues long: Glutamate-1-semialdehyde 2,1-aminomutase (424 aa).

The residue at position 263 (Lys263) is an N6-(pyridoxal phosphate)lysine.

It belongs to the class-III pyridoxal-phosphate-dependent aminotransferase family. HemL subfamily. Homodimer. It depends on pyridoxal 5'-phosphate as a cofactor.

The protein localises to the cytoplasm. It catalyses the reaction (S)-4-amino-5-oxopentanoate = 5-aminolevulinate. Its pathway is porphyrin-containing compound metabolism; protoporphyrin-IX biosynthesis; 5-aminolevulinate from L-glutamyl-tRNA(Glu): step 2/2. The chain is Glutamate-1-semialdehyde 2,1-aminomutase from Campylobacter jejuni subsp. jejuni serotype O:23/36 (strain 81-176).